The chain runs to 185 residues: Putative 3-methyladenine DNA glycosylase (185 aa).

It belongs to the DNA glycosylase MPG family.

The protein is Putative 3-methyladenine DNA glycosylase of Rhizobium meliloti (strain 1021) (Ensifer meliloti).